A 217-amino-acid chain; its full sequence is Large ribosomal subunit protein uL3 (217 aa).

A compositionally biased stretch (polar residues) spans 133–145; it reads GRASHGNSRSHNV. Residues 133 to 153 are disordered; the sequence is GRASHGNSRSHNVPGSIGMAQ. Residue Q153 is modified to N5-methylglutamine.

This sequence belongs to the universal ribosomal protein uL3 family. In terms of assembly, part of the 50S ribosomal subunit. Forms a cluster with proteins L14 and L19. Post-translationally, methylated by PrmB.

Its function is as follows. One of the primary rRNA binding proteins, it binds directly near the 3'-end of the 23S rRNA, where it nucleates assembly of the 50S subunit. This Ralstonia pickettii (strain 12J) protein is Large ribosomal subunit protein uL3.